We begin with the raw amino-acid sequence, 101 residues long: Small ribosomal subunit protein bS18c (101 aa).

A compositionally biased stretch (basic residues) spans 1 to 19 (MDKSKQLFRKSKGSFRRRL). Residues 1–23 (MDKSKQLFRKSKGSFRRRLPPIG) are disordered.

It belongs to the bacterial ribosomal protein bS18 family. Part of the 30S ribosomal subunit.

It localises to the plastid. The protein localises to the chloroplast. The sequence is that of Small ribosomal subunit protein bS18c from Acorus gramineus (Dwarf sweet flag).